The sequence spans 858 residues: DNA mismatch repair protein MutS (858 aa).

Residue 611-618 coordinates ATP; it reads GPNMGGKS.

Belongs to the DNA mismatch repair MutS family.

This protein is involved in the repair of mismatches in DNA. It is possible that it carries out the mismatch recognition step. This protein has a weak ATPase activity. This is DNA mismatch repair protein MutS from Actinobacillus succinogenes (strain ATCC 55618 / DSM 22257 / CCUG 43843 / 130Z).